Here is a 366-residue protein sequence, read N- to C-terminus: Probable cyclin-dependent kinase 10 (366 aa).

A Protein kinase domain is found at 7 to 293 (FEKLDSIGEG…ASDAIKHPFF (287 aa)). ATP-binding positions include 13–21 (IGEGTYGIV) and K36. The active-site Proton acceptor is D132. A compositionally biased stretch (low complexity) spans 315–358 (FKNQNKKQNNNFNNFVQNNQTNQNNQTNQNNQTNQNNKTSQNNN). The tract at residues 315–366 (FKNQNKKQNNNFNNFVQNNQTNQNNQTNQNNQTNQNNKTSQNNNMDSYKYSK) is disordered.

Belongs to the protein kinase superfamily. CMGC Ser/Thr protein kinase family. CDC2/CDKX subfamily.

The catalysed reaction is L-seryl-[protein] + ATP = O-phospho-L-seryl-[protein] + ADP + H(+). The enzyme catalyses L-threonyl-[protein] + ATP = O-phospho-L-threonyl-[protein] + ADP + H(+). The sequence is that of Probable cyclin-dependent kinase 10 (cdk10) from Dictyostelium discoideum (Social amoeba).